Here is a 316-residue protein sequence, read N- to C-terminus: MTKEFHHVTVLLHETIDMLDVKPDGIYVDATLGGAGHSEYLLSKLSEKGHLYAFDQDQNAIDNAQKRLAPYIEKGMVTFIKDNFRHLQARLREAGVQEIDGICYDLGVSSPQLDQRERGFSYKKDAPLDMRMNQDASLTAYEVVNNYDYHDLVRIFFKYGEDKFSKQIARKIEQAREVKPIETTTELAEIIKLVKPAKELKKKGHPAKQIFQAIRIEVNDELGAADESIQQAMDMLALDGRISVITFHSLEDRLTKQLFKEASTVEVPKGLPFIPDDLKPKMELVSRKPILPSAEELEANNRSHSAKLRVARKIHK.

Residues 35-37 (AGH), D55, F84, D105, and Q112 each bind S-adenosyl-L-methionine.

The protein belongs to the methyltransferase superfamily. RsmH family.

It is found in the cytoplasm. It catalyses the reaction cytidine(1402) in 16S rRNA + S-adenosyl-L-methionine = N(4)-methylcytidine(1402) in 16S rRNA + S-adenosyl-L-homocysteine + H(+). Its function is as follows. Specifically methylates the N4 position of cytidine in position 1402 (C1402) of 16S rRNA. This chain is Ribosomal RNA small subunit methyltransferase H, found in Streptococcus pneumoniae (strain 70585).